Reading from the N-terminus, the 221-residue chain is Probable GTP-binding protein EngB (221 aa).

Residues 23 to 211 (PLREVAFAGR…DNLIIKWLFE (189 aa)) enclose the EngB-type G domain. Positions 38 and 60 each coordinate Mg(2+).

This sequence belongs to the TRAFAC class TrmE-Era-EngA-EngB-Septin-like GTPase superfamily. EngB GTPase family. It depends on Mg(2+) as a cofactor.

Functionally, necessary for normal cell division and for the maintenance of normal septation. The polypeptide is Probable GTP-binding protein EngB (Polynucleobacter asymbioticus (strain DSM 18221 / CIP 109841 / QLW-P1DMWA-1) (Polynucleobacter necessarius subsp. asymbioticus)).